The primary structure comprises 312 residues: Olfactory receptor 2L8 (312 aa).

The Extracellular portion of the chain corresponds to 1–24 (MENYNQTSTDFILLGLFPPSRIDL). N5 carries N-linked (GlcNAc...) asparagine glycosylation. A helical transmembrane segment spans residues 25–48 (FFFILIVFIFLMALIGNLSMILLI). Over 49 to 56 (FLDTHLHT) the chain is Cytoplasmic. The chain crosses the membrane as a helical span at residues 57 to 78 (PMYFLLSQLSLIDLNYISTIVP). Over 79 to 99 (KMASDFLHGNKSISFTGCGIQ) the chain is Extracellular. A glycan (N-linked (GlcNAc...) asparagine) is linked at N88. Cysteines 96 and 188 form a disulfide. A helical membrane pass occupies residues 100 to 119 (SFFFLALGGAEALLLASMAY). Topologically, residues 120–138 (DRYIAICFPLHYLIRMSKR) are cytoplasmic. Residues 139–157 (VCVLMITGSWIIGSINACA) form a helical membrane-spanning segment. The Extracellular segment spans residues 158 to 194 (HTVYVLHIPYCRSRAINHFFCDVPAMVTLACMDTWVY). Residues 195 to 218 (EGTVFLSATIFLVFPFIGISCSYG) form a helical membrane-spanning segment. The Cytoplasmic segment spans residues 219–235 (QVLFAVYHMKSAEGRKK). A helical transmembrane segment spans residues 236-258 (AYLTCSTHLTVVTFYYAPFVYTY). The Extracellular segment spans residues 259–271 (LRPRSLRSPTEDK). Residues 272–291 (VLAVFYTILTPMLNPIIYSL) form a helical membrane-spanning segment. At 292-312 (RNKEVMGALTRVSQRICSVKM) the chain is on the cytoplasmic side.

This sequence belongs to the G-protein coupled receptor 1 family.

Its subcellular location is the cell membrane. Odorant receptor. In Homo sapiens (Human), this protein is Olfactory receptor 2L8 (OR2L8).